A 340-amino-acid polypeptide reads, in one-letter code: GTP 3',8-cyclase (340 aa).

In terms of domain architecture, Radical SAM core spans 8–227 (KLGRPIRDLR…DMIESHFDIE (220 aa)). Residue arginine 17 coordinates GTP. Residues cysteine 24 and cysteine 28 each coordinate [4Fe-4S] cluster. Tyrosine 30 serves as a coordination point for S-adenosyl-L-methionine. Cysteine 31 provides a ligand contact to [4Fe-4S] cluster. A GTP-binding site is contributed by arginine 71. Glycine 75 serves as a coordination point for S-adenosyl-L-methionine. Threonine 102 is a binding site for GTP. Serine 126 lines the S-adenosyl-L-methionine pocket. Lysine 163 is a GTP binding site. Methionine 197 is a binding site for S-adenosyl-L-methionine. Positions 261 and 264 each coordinate [4Fe-4S] cluster. 266 to 268 (RAR) is a GTP binding site. Cysteine 278 provides a ligand contact to [4Fe-4S] cluster.

It belongs to the radical SAM superfamily. MoaA family. Monomer and homodimer. The cofactor is [4Fe-4S] cluster.

It carries out the reaction GTP + AH2 + S-adenosyl-L-methionine = (8S)-3',8-cyclo-7,8-dihydroguanosine 5'-triphosphate + 5'-deoxyadenosine + L-methionine + A + H(+). It functions in the pathway cofactor biosynthesis; molybdopterin biosynthesis. Functionally, catalyzes the cyclization of GTP to (8S)-3',8-cyclo-7,8-dihydroguanosine 5'-triphosphate. The sequence is that of GTP 3',8-cyclase from Staphylococcus haemolyticus (strain JCSC1435).